The following is a 361-amino-acid chain: Phosphate acyltransferase (361 aa).

Residues 340 to 361 (VPADGAATEQGPTPRRIAPPRT) form a disordered region.

The protein belongs to the PlsX family. Homodimer. Probably interacts with PlsY.

It localises to the cytoplasm. The catalysed reaction is a fatty acyl-[ACP] + phosphate = an acyl phosphate + holo-[ACP]. Its pathway is lipid metabolism; phospholipid metabolism. Catalyzes the reversible formation of acyl-phosphate (acyl-PO(4)) from acyl-[acyl-carrier-protein] (acyl-ACP). This enzyme utilizes acyl-ACP as fatty acyl donor, but not acyl-CoA. This Anaeromyxobacter dehalogenans (strain 2CP-1 / ATCC BAA-258) protein is Phosphate acyltransferase.